Here is a 58-residue protein sequence, read N- to C-terminus: T-cell receptor gamma alternate reading frame protein (58 aa).

In terms of tissue distribution, detected at low levels in the ductal cells of the salivary gland but not in the acinar cells (at protein level). Expressed in endometrium (at protein level). Expressed in epithelial cells within the acinar ducts of the prostate.

This is T-cell receptor gamma alternate reading frame protein from Homo sapiens (Human).